A 511-amino-acid polypeptide reads, in one-letter code: Histidine ammonia-lyase (511 aa).

Positions 142-144 (ASG) form a cross-link, 5-imidazolinone (Ala-Gly). Ser-143 is modified (2,3-didehydroalanine (Ser)).

Belongs to the PAL/histidase family. Contains an active site 4-methylidene-imidazol-5-one (MIO), which is formed autocatalytically by cyclization and dehydration of residues Ala-Ser-Gly.

It is found in the cytoplasm. The enzyme catalyses L-histidine = trans-urocanate + NH4(+). It functions in the pathway amino-acid degradation; L-histidine degradation into L-glutamate; N-formimidoyl-L-glutamate from L-histidine: step 1/3. This Brucella canis (strain ATCC 23365 / NCTC 10854 / RM-666) protein is Histidine ammonia-lyase.